A 158-amino-acid chain; its full sequence is NAD(P)H-quinone oxidoreductase subunit J, chloroplastic (158 aa).

Belongs to the complex I 30 kDa subunit family. NDH is composed of at least 16 different subunits, 5 of which are encoded in the nucleus.

It localises to the plastid. The protein resides in the chloroplast thylakoid membrane. The enzyme catalyses a plastoquinone + NADH + (n+1) H(+)(in) = a plastoquinol + NAD(+) + n H(+)(out). The catalysed reaction is a plastoquinone + NADPH + (n+1) H(+)(in) = a plastoquinol + NADP(+) + n H(+)(out). NDH shuttles electrons from NAD(P)H:plastoquinone, via FMN and iron-sulfur (Fe-S) centers, to quinones in the photosynthetic chain and possibly in a chloroplast respiratory chain. The immediate electron acceptor for the enzyme in this species is believed to be plastoquinone. Couples the redox reaction to proton translocation, and thus conserves the redox energy in a proton gradient. The protein is NAD(P)H-quinone oxidoreductase subunit J, chloroplastic of Lotus japonicus (Lotus corniculatus var. japonicus).